The following is a 130-amino-acid chain: Vascular-related unknown protein 3 (130 aa).

Residues 45–81 (DDSSMMSDAASPMGCVEEDTASSPSNRTEGYSGMEDN) are disordered.

Its function is as follows. Involved in the regulation of plant growth. The chain is Vascular-related unknown protein 3 from Arabidopsis thaliana (Mouse-ear cress).